A 292-amino-acid chain; its full sequence is Ribosomal protein L11 methyltransferase (292 aa).

S-adenosyl-L-methionine contacts are provided by Thr-144, Gly-165, Asp-187, and Asn-229.

It belongs to the methyltransferase superfamily. PrmA family.

It is found in the cytoplasm. The enzyme catalyses L-lysyl-[protein] + 3 S-adenosyl-L-methionine = N(6),N(6),N(6)-trimethyl-L-lysyl-[protein] + 3 S-adenosyl-L-homocysteine + 3 H(+). Its function is as follows. Methylates ribosomal protein L11. This chain is Ribosomal protein L11 methyltransferase, found in Pseudomonas fluorescens (strain ATCC BAA-477 / NRRL B-23932 / Pf-5).